The sequence spans 63 residues: uncharacterized protein (63 aa).

This is an uncharacterized protein from Rickettsia conorii (strain ATCC VR-613 / Malish 7).